The chain runs to 307 residues: B3 domain-containing protein At5g18000 (307 aa).

Residues 20-115 (FFKILRREDH…CFNVTIFEAD (96 aa)) constitute a DNA-binding region (TF-B3 1). 2 disordered regions span residues 122-141 (PRKT…RKSI) and 151-209 (IESW…SEAG). The segment covering 166-177 (ESTSGRLTQKQE) has biased composition (polar residues). The span at 178–192 (LNLRKKEADKTEKSK) shows a compositional bias: basic and acidic residues. Residues 214-307 (IPEFKLTIKK…TEMRVKVSKE (94 aa)) constitute a DNA-binding region (TF-B3 2).

It localises to the nucleus. The chain is B3 domain-containing protein At5g18000 from Arabidopsis thaliana (Mouse-ear cress).